The sequence spans 182 residues: Glycerol-3-phosphate acyltransferase 1 (182 aa).

Transmembrane regions (helical) follow at residues 5–25, 54–74, 81–101, 117–137, and 157–177; these read MQFLYLVASYLIGNILTAYIV, GYFIATFLGDAIKGAIVVAVA, PTFVMLTLLAVIIGHIYPVLF, IAFDYLIALTLLGIFIVFYLI, and ILYSYSIVTTILSGIIIVLIL.

It belongs to the PlsY family. Probably interacts with PlsX.

The protein localises to the cell membrane. It catalyses the reaction an acyl phosphate + sn-glycerol 3-phosphate = a 1-acyl-sn-glycero-3-phosphate + phosphate. It functions in the pathway lipid metabolism; phospholipid metabolism. Its function is as follows. Catalyzes the transfer of an acyl group from acyl-phosphate (acyl-PO(4)) to glycerol-3-phosphate (G3P) to form lysophosphatidic acid (LPA). This enzyme utilizes acyl-phosphate as fatty acyl donor, but not acyl-CoA or acyl-ACP. This chain is Glycerol-3-phosphate acyltransferase 1, found in Bacillus cereus (strain ATCC 14579 / DSM 31 / CCUG 7414 / JCM 2152 / NBRC 15305 / NCIMB 9373 / NCTC 2599 / NRRL B-3711).